A 1138-amino-acid chain; its full sequence is BMP-2-inducible protein kinase (1138 aa).

A Phosphoserine modification is found at Ser-13. In terms of domain architecture, Protein kinase spans 48–313 (VTLEESLAEG…DIFQVSYFAF (266 aa)). ATP-binding positions include 54 to 62 (LAEGGFSTV) and Lys-76. The Proton acceptor role is filled by Asp-177. Disordered regions lie at residues 355–435 (TDTI…RVLQ), 638–831 (NRLG…PADA), and 906–1018 (PRSV…EFLT). Over residues 358 to 390 (IGPTETSIAPRQRPKANSTAATSSVLTIQSSAT) the composition is skewed to polar residues. The span at 417-435 (VLMVQGPPQQPPQQHRVLQ) shows a compositional bias: low complexity. Ser-676 carries the phosphoserine modification. A compositionally biased stretch (polar residues) spans 684 to 701 (HSPNQKSITANLTKNGGS). A compositionally biased stretch (basic and acidic residues) spans 706–715 (KDQRAGKKTS). Phosphoserine is present on residues Ser-733, Ser-806, and Ser-807. The segment covering 787–813 (DKHSSDSECEQAKTKRGDTSSLRRDKP) has biased composition (basic and acidic residues). Thr-819 carries the phosphothreonine modification. Phosphoserine is present on Ser-908. Polar residues predominate over residues 915 to 926 (TPFQPFSVSASK). Residues 951–965 (VKQRSLQKLSSRQRR) show a composition bias toward basic residues. Phosphoserine occurs at positions 1010, 1012, 1013, 1020, 1022, 1087, and 1091. The segment at 1117 to 1138 (TPQQSQPVELDPFGAAPFPSKQ) is disordered.

It belongs to the protein kinase superfamily. Ser/Thr protein kinase family. Autophosphorylated. As to expression, expressed in osteocytes and osteoblasts.

It is found in the nucleus. The enzyme catalyses L-seryl-[protein] + ATP = O-phospho-L-seryl-[protein] + ADP + H(+). It catalyses the reaction L-threonyl-[protein] + ATP = O-phospho-L-threonyl-[protein] + ADP + H(+). May be involved in osteoblast differentiation. The polypeptide is BMP-2-inducible protein kinase (Bmp2k) (Mus musculus (Mouse)).